Reading from the N-terminus, the 177-residue chain is Anti-apoptotic protein NR13 (177 aa).

The BH1 motif lies at 75-94 (LETDGGLNWGRLLALVVFAG). The chain crosses the membrane as a helical span at residues 86–106 (LLALVVFAGTLAAALAESACE). The short motif at 126–141 (EWMEEHGGWDGFCRFF) is the BH2 element. A helical membrane pass occupies residues 156 to 176 (SNAIMAAAGFGIAGLAFLLVV).

It belongs to the Bcl-2 family. In terms of assembly, interacts with BAX. Mainly expressed in neural and muscular tissues.

Its subcellular location is the cell membrane. Its function is as follows. Shows anti-apoptotic properties. Counteract the pro-apoptotic activity of BAX. This is Anti-apoptotic protein NR13 (NR13) from Coturnix japonica (Japanese quail).